A 314-amino-acid chain; its full sequence is Acetyl-coenzyme A carboxylase carboxyl transferase subunit beta (314 aa).

Positions 37 to 307 constitute a CoA carboxyltransferase N-terminal domain; that stretch reads LWQKCPACDT…MSLPSIDSEA (271 aa). The Zn(2+) site is built by Cys41, Cys44, Cys60, and Cys63. The C4-type zinc finger occupies 41–63; that stretch reads CPACDTLTYTKDLQQNWQVCPSC.

The protein belongs to the AccD/PCCB family. Acetyl-CoA carboxylase is a heterohexamer composed of biotin carboxyl carrier protein (AccB), biotin carboxylase (AccC) and two subunits each of ACCase subunit alpha (AccA) and ACCase subunit beta (AccD). It depends on Zn(2+) as a cofactor.

The protein localises to the cytoplasm. The enzyme catalyses N(6)-carboxybiotinyl-L-lysyl-[protein] + acetyl-CoA = N(6)-biotinyl-L-lysyl-[protein] + malonyl-CoA. The protein operates within lipid metabolism; malonyl-CoA biosynthesis; malonyl-CoA from acetyl-CoA: step 1/1. Functionally, component of the acetyl coenzyme A carboxylase (ACC) complex. Biotin carboxylase (BC) catalyzes the carboxylation of biotin on its carrier protein (BCCP) and then the CO(2) group is transferred by the transcarboxylase to acetyl-CoA to form malonyl-CoA. This chain is Acetyl-coenzyme A carboxylase carboxyl transferase subunit beta, found in Synechococcus sp. (strain JA-2-3B'a(2-13)) (Cyanobacteria bacterium Yellowstone B-Prime).